The sequence spans 265 residues: Photosystem II 22 kDa protein, chloroplastic (265 aa).

The N-terminal 59 residues, 1–59 (MAQTMLLTSGVTAGHFLRNKSPLAQPKVHHLFLSGNSPVALPSRRQSFVPLALFKPKTK), are a transit peptide targeting the chloroplast. 2 tandem repeats follow at residues 54–158 (FKPK…FVDD) and 159–264 (PPTG…DGEE). 4 helical membrane passes run 96 to 116 (VAMI…KGIL), 130 to 150 (AEPL…GALG), 195 to 215 (LFVG…EIIT), and 229 to 249 (IPIQ…FFAA).

The protein belongs to the ELIP/psbS family.

Its subcellular location is the plastid. The protein localises to the chloroplast thylakoid membrane. Functionally, plays an important role in non-photochemical quenching (NPQ), a process maintains the balance between dissipation and utilization of light energy to minimize generation of oxidizing molecules, thereby protecting the plant against photo-oxidative damage; acts upstream of DLDG1. Is not necessary for efficient light harvesting and photosynthesis. The chain is Photosystem II 22 kDa protein, chloroplastic from Arabidopsis thaliana (Mouse-ear cress).